The sequence spans 422 residues: Roquefortine prenyltransferase roqD (422 aa).

Substrate is bound at residue Glu100. Arg113, Lys200, and Tyr202 together coordinate dimethylallyl diphosphate. Position 204 (Tyr204) interacts with substrate. 5 residues coordinate dimethylallyl diphosphate: Lys268, Tyr270, Tyr353, Tyr416, and Tyr420.

The protein belongs to the tryptophan dimethylallyltransferase family.

It participates in alkaloid biosynthesis. Functionally, roquefortine prenyltransferase; part of the gene cluster that mediates the biosynthesis of the mycotoxins roquefortine C and meleagrin. The first stage is catalyzed by the dipeptide synthase roqA which condenses histidine and tryptophan to produce histidyltryptophanyldiketopiperazine (HTD). HTD is then converted to roquefortine C through two possible pathways. In the first pathway, prenyltransferase roqD transforms HTD to the intermediate roquefortine D, which is in turn converted to roquefortine C by the cytochrome P450 monooxygenase roqR. In the second pathway, HTD is first converted to the intermediate dehydrohistidyltryptophanyldi-ketopiperazine (DHTD) by roqR which is then prenylated by roqD to form roquefortine C. Roquefortine C can be further transformed to meleagrin via three more reactions including oxydation to glandicolin A by roqM, which is further reduced to glandicoline B by roqO. Finally, glandicoline B is converted to meleagrin by the glandicoline B O-methyltransferase roqN. More studies identified further branching and additional metabolites produced by the roquefortine/meleagrin cluster, including roquefortine F, roquefortine L, roquefortine M, roquefortine N and neoxaline. This Penicillium rubens (strain ATCC 28089 / DSM 1075 / NRRL 1951 / Wisconsin 54-1255) (Penicillium chrysogenum) protein is Roquefortine prenyltransferase roqD.